Consider the following 266-residue polypeptide: NADP-dependent mannitol dehydrogenase (266 aa).

NADP(+) contacts are provided by Ser53, Asn107, and Lys140. The active-site Proton donor is the Ser159. Residues Tyr174, Lys178, Ile206, and Thr208 each coordinate NADP(+). Tyr174 serves as the catalytic Proton acceptor. Catalysis depends on Lys178, which acts as the Lowers pKa of active site Tyr.

Belongs to the short-chain dehydrogenases/reductases (SDR) family. Homotetramer.

It catalyses the reaction D-mannitol + NADP(+) = D-fructose + NADPH + H(+). In terms of biological role, D-mannitol 2-dehydrogenase which is not necessary for D-mannitol catabolism. D-mannitol metabolism occurs via at least two different routes involving mannitol dehydrogenase (MDH) or mannitol 1-phosphate dehydrogenase, and the exact physiological role of mannitol dehydrogenases remains unclear. In Hypocrea jecorina (strain ATCC 56765 / BCRC 32924 / NRRL 11460 / Rut C-30) (Trichoderma reesei), this protein is NADP-dependent mannitol dehydrogenase.